The following is a 277-amino-acid chain: Large ribosomal subunit protein uL2 (277 aa).

2 disordered regions span residues 35–60 (EKQS…GHKQ) and 225–277 (MNPV…ANKR). The span at 43–53 (RNNNGHITTRH) shows a compositional bias: polar residues.

It belongs to the universal ribosomal protein uL2 family. Part of the 50S ribosomal subunit. Forms a bridge to the 30S subunit in the 70S ribosome.

One of the primary rRNA binding proteins. Required for association of the 30S and 50S subunits to form the 70S ribosome, for tRNA binding and peptide bond formation. It has been suggested to have peptidyltransferase activity; this is somewhat controversial. Makes several contacts with the 16S rRNA in the 70S ribosome. This Methylobacillus flagellatus (strain ATCC 51484 / DSM 6875 / VKM B-1610 / KT) protein is Large ribosomal subunit protein uL2.